Consider the following 211-residue polypeptide: Large ribosomal subunit protein bL25 (211 aa).

The disordered stretch occupies residues 188–211; the sequence is HREEEKAPEETGEAAPAPTPETGQ. A compositionally biased stretch (low complexity) spans 200–211; the sequence is EAAPAPTPETGQ.

This sequence belongs to the bacterial ribosomal protein bL25 family. CTC subfamily. In terms of assembly, part of the 50S ribosomal subunit; part of the 5S rRNA/L5/L18/L25 subcomplex. Contacts the 5S rRNA. Binds to the 5S rRNA independently of L5 and L18.

In terms of biological role, this is one of the proteins that binds to the 5S RNA in the ribosome where it forms part of the central protuberance. The protein is Large ribosomal subunit protein bL25 of Desulforudis audaxviator (strain MP104C).